The sequence spans 341 residues: Heat-shock protein cognate (HSC) co-chaperone sgt12 (341 aa).

The segment at 86–123 is disordered; sequence PSKEPASAGAQAQSTEAQQPKAGAPTPESDKLKSEGNA. 3 TPR repeats span residues 114–147, 148–181, and 182–215; these read SDKL…APAN, PIYL…DPKY, and SKAW…EGNG. Residues 232–280 form a disordered region; it reads EEANRGAEPPADDVDDAAGASRGAGGMPDLSSLASMLGGRGGGGGGMPD. The segment covering 269 to 278 has biased composition (gly residues); sequence GGRGGGGGGM.

It belongs to the SGT family. In terms of assembly, forms homodimers. Component of the get4/get5/sgt2 sorting complex. Dimers of sgt2 bind directly a single get5. Binds HSC family members ssa1, sse1, hsp104 and hsc82 via its TPR domain.

It is found in the cytoplasm. In terms of biological role, heat-shock protein cognate (HSC) co-chaperone that preferentially binds endoplasmic reticulum-destined tail-anchored (TA) proteins and directs them to the GET (guided entry of TA proteins) pathway via get4 and get5. Get4 and get5 form an obligate complex that catalyzes the transfer of tail-anchored proteins destined to the endoplasmic reticulum from sgt2 to the cytosolic targeting factor which then targets the TA protein to the ER membrane via get1/get2. The polypeptide is Heat-shock protein cognate (HSC) co-chaperone sgt12 (Aspergillus fumigatus (strain ATCC MYA-4609 / CBS 101355 / FGSC A1100 / Af293) (Neosartorya fumigata)).